We begin with the raw amino-acid sequence, 258 residues long: Chymotrypsin-2 (258 aa).

Positions 1–17 (MLRKVFAVVSVLLVVSA) are cleaved as a signal peptide. The propeptide at 18–32 (AKVTKLVLDDHYVNR) is activation peptide. Positions 33-255 (VVGGEVAKNG…YHEWVRTTMA (223 aa)) constitute a Peptidase S1 domain. Cysteines 59 and 75 form a disulfide. Catalysis depends on charge relay system residues histidine 74 and aspartate 119. 2 disulfides stabilise this stretch: cysteine 182–cysteine 198 and cysteine 208–cysteine 232. The Charge relay system role is filled by serine 212.

The protein belongs to the peptidase S1 family. As to expression, after blood feeding, expression is induced in the midgut epithelium, followed by secretion into the midgut lumen.

The protein localises to the secreted. It carries out the reaction Preferential cleavage: Tyr-|-Xaa, Trp-|-Xaa, Phe-|-Xaa, Leu-|-Xaa.. The chain is Chymotrypsin-2 (CHYM2) from Anopheles gambiae (African malaria mosquito).